A 678-amino-acid polypeptide reads, in one-letter code: Alpha-L-arabinofuranosidase 1 (678 aa).

The first 33 residues, 1 to 33 (MDMESWKLLRSVCVLSFLLGSCFVYQSLRVVDA), serve as a signal peptide directing secretion. In terms of domain architecture, CBM-cenC spans 152–239 (NIEEGKKYKV…WIDQVSAMPV (88 aa)). N-linked (GlcNAc...) asparagine glycosylation is found at N181, N362, N523, and N555.

Belongs to the glycosyl hydrolase 51 family. As to expression, expressed in roots, leaves, flowers, stems, siliques and seedlings. Observed in zones of cell proliferation, the vascular system and floral abscission zones. Expressed in the guard cells in stems, in xylem vessels and parenchyma cells surrounding the vessels, in the cambium and in the phloem, but not in the secondary xylem.

It is found in the secreted. The protein localises to the extracellular space. The protein resides in the extracellular matrix. It carries out the reaction Hydrolysis of terminal non-reducing alpha-L-arabinofuranoside residues in alpha-L-arabinosides.. May be involved in the coordinated dissolution of the cell wall matrix during abscission and in the secondary cell wall formation in xylem vessels. Prefers arabinoxylan, but may also use pectic arabinans as substrates. This chain is Alpha-L-arabinofuranosidase 1 (ASD1), found in Arabidopsis thaliana (Mouse-ear cress).